Here is a 658-residue protein sequence, read N- to C-terminus: Alkyldihydroxyacetonephosphate synthase, peroxisomal (658 aa).

Disordered regions lie at residues 1 to 41 and 63 to 86; these read MAEA…LRVL and AASA…IPKK. A peroxisome-targeting transit peptide spans 1–58; that stretch reads MAEAAAAAGGTGLGAGASYGSAADRDRDPDPDRAGRRLRVLSGHLLGRPREALSTNEC. Residues 23–35 show a composition bias toward basic and acidic residues; it reads ADRDRDPDPDRAG. Residues 63–77 are compositionally biased toward low complexity; it reads AASAATAAPTATPAA. Ser-65 bears the Phosphoserine mark. A Phosphothreonine modification is found at Thr-74. The residue at position 102 (Lys-102) is an N6-acetyllysine. One can recognise an FAD-binding PCMH-type domain in the interval 202–384; it reads FERIPDIVLW…TEATIKIRPV (183 aa). Residues 234 to 240, 303 to 309, and 316 to 319 each bind FAD; these read PIGGGTS, DSLEFST, and TRAS. Lys-347 carries the post-translational modification N6-acetyllysine. Position 368–374 (368–374) interacts with FAD; the sequence is EGTLGVI. Arg-515 serves as a coordination point for substrate. Tyr-578 acts as the Proton donor/acceptor in catalysis. Important for enzyme activity regions lie at residues 615 to 617 and 654 to 658; these read HHH and NRNLL.

This sequence belongs to the FAD-binding oxidoreductase/transferase type 4 family. Homodimer. Requires FAD as cofactor.

The protein localises to the peroxisome membrane. It is found in the peroxisome. It catalyses the reaction a long chain fatty alcohol + a 1-acylglycerone 3-phosphate = a 1-O-alkylglycerone 3-phosphate + a long-chain fatty acid + H(+). The catalysed reaction is hexadecan-1-ol + 1-hexadecanoylglycerone 3-phosphate = 1-O-hexadecylglycerone 3-phosphate + hexadecanoate + H(+). It carries out the reaction 1-hexadecanoylglycerone 3-phosphate + a long-chain fatty acid = a 1-acylglycerone 3-phosphate + hexadecanoate. The protein operates within glycerolipid metabolism; ether lipid biosynthesis. Functionally, catalyzes the exchange of the acyl chain in acyl-dihydroxyacetonephosphate (acyl-DHAP) for a long chain fatty alcohol, yielding the first ether linked intermediate, i.e. alkyl-dihydroxyacetonephosphate (alkyl-DHAP), in the pathway of ether lipid biosynthesis. The polypeptide is Alkyldihydroxyacetonephosphate synthase, peroxisomal (AGPS) (Homo sapiens (Human)).